A 944-amino-acid chain; its full sequence is Trehalose monomycolate exporter MmpL3 (944 aa).

At methionine 1–arginine 13 the chain is on the cytoplasmic side. The chain crosses the membrane as a helical span at residues phenylalanine 14–leucine 34. Residues glycine 35 to glutamate 185 are Periplasmic-facing. Residue glutamine 40–tyrosine 44 participates in a 1,2-diacylglycero-3-phosphoethanolamine binding. A helical transmembrane segment spans residues valine 186–alanine 206. Topologically, residues glycine 207–proline 209 are cytoplasmic. Residues valine 210–phenylalanine 230 traverse the membrane as a helical segment. At glycine 231–tyrosine 235 the chain is on the periplasmic side. Residues phenylalanine 236 to isoleucine 256 form a helical membrane-spanning segment. Residues valine 257–threonine 286 are Cytoplasmic-facing. The chain crosses the membrane as a helical span at residues phenylalanine 287–leucine 307. The Periplasmic portion of the chain corresponds to lysine 308 to threonine 314. The chain crosses the membrane as a helical span at residues isoleucine 315–isoleucine 335. At leucine 336 to proline 396 the chain is on the cytoplasmic side. The helical transmembrane segment at valine 397–leucine 417 threads the bilayer. Over serine 418–methionine 562 the chain is Periplasmic. A helical transmembrane segment spans residues valine 563 to leucine 583. Topologically, residues proline 584–lysine 586 are cytoplasmic. A helical transmembrane segment spans residues alanine 587 to valine 607. Residues aspartate 608–asparagine 616 are Periplasmic-facing. A helical membrane pass occupies residues phenylalanine 617 to leucine 637. The Cytoplasmic segment spans residues serine 638 to arginine 672. Residues isoleucine 673–leucine 693 traverse the membrane as a helical segment. Residues valine 694–tyrosine 698 are Periplasmic-facing. A helical membrane pass occupies residues leucine 699–valine 719. Residues proline 720–leucine 944 lie on the Cytoplasmic side of the membrane. The segment at alanine 778–leucine 944 is disordered. The span at proline 791–threonine 828 shows a compositional bias: low complexity. Residues arginine 829–proline 839 show a composition bias toward polar residues. The segment covering serine 855–alanine 866 has biased composition (pro residues).

The protein belongs to the resistance-nodulation-cell division (RND) (TC 2.A.6) family. MmpL subfamily. Monomer. Interacts with TtfA (via N-terminus); active trehalose monomycolate (TMM) biosynthesis is not required for the complex formation.

The protein resides in the cell inner membrane. Its subcellular location is the cell septum. The protein localises to the cell tip. Inhibited by the antitubercular drug SQ109. Also inhibited by several other compounds such as the pyrrole derivative BM212, the adamantyl urea derivative AU1235, the benzimidazole C215, indoleamides, tetrahydropyrazolo[1,5-a]pyrimidine-3-carboxamide (THPP) and N-benzyl-6',7'-dihydrospiro[piperidine-4,4'-thieno[3,2-c]pyran] (Spiro) analogs. Inhibitory effects of these compounds, including SQ109, are most likely due to their ability to dissipate the transmembrane electrochemical proton gradient. Transports trehalose monomycolate (TMM) to the cell wall. Flips TMM across the inner membrane. Membrane potential is not required for this function. Transports probably phosphatidylethanolamine (PE) as well. Binds specifically both TMM and PE, but not trehalose dimycolate (TDM). Also binds diacylglycerol (DAG) and other phospholipids, including phosphatidylglycerol (PG), phosphatidylinositol (PI), and cardiolipin (CDL). Contributes to membrane potential, cell wall composition, antibiotic susceptibility and fitness. Could also be part of a heme-iron acquisition system. In terms of biological role, is the target of the antitubercular drug SQ109. In Mycobacterium tuberculosis (strain ATCC 25618 / H37Rv), this protein is Trehalose monomycolate exporter MmpL3 (mmpL3).